The following is a 549-amino-acid chain: Calcium-dependent protein kinase 5 (549 aa).

Residue Gly2 is the site of N-myristoyl glycine attachment. Positions Asp43–Gly69 are disordered. The segment covering Arg52 to Ala64 has biased composition (low complexity). The Protein kinase domain maps to Tyr92–Ile350. Residues Leu98–Thr106 and Lys121 each bind ATP. Asp216 acts as the Proton acceptor in catalysis. The segment at Ala356 to Ile386 is autoinhibitory domain. 4 consecutive EF-hand domains span residues Glu393–Thr428, Leu429–Leu464, Glu465–Pro500, and Asp501–Gly534. The Ca(2+) site is built by Asp406, Asp408, Ser410, Glu417, Asp442, Asp444, Ser446, Thr448, Glu453, Asp478, Asp480, Ser482, Tyr484, Glu489, Asp512, Asp514, Asp516, Arg518, and Glu523.

It belongs to the protein kinase superfamily. Ser/Thr protein kinase family. CDPK subfamily.

Its subcellular location is the membrane. The catalysed reaction is L-seryl-[protein] + ATP = O-phospho-L-seryl-[protein] + ADP + H(+). The enzyme catalyses L-threonyl-[protein] + ATP = O-phospho-L-threonyl-[protein] + ADP + H(+). Its activity is regulated as follows. Activated by calcium. Autophosphorylation may play an important role in the regulation of the kinase activity. In terms of biological role, may play a role in signal transduction pathways that involve calcium as a second messenger. This is Calcium-dependent protein kinase 5 from Oryza sativa subsp. japonica (Rice).